The sequence spans 294 residues: Cytidine deaminase (294 aa).

2 consecutive CMP/dCMP-type deaminase domains span residues 48–168 and 186–294; these read DEDA…FGPK and LTGD…VLLG. Position 89–91 (89–91) interacts with substrate; sequence NME. His102 is a binding site for Zn(2+). Glu104 functions as the Proton donor in the catalytic mechanism. Zn(2+)-binding residues include Cys129 and Cys132.

Belongs to the cytidine and deoxycytidylate deaminase family. Homodimer. Zn(2+) serves as cofactor.

It catalyses the reaction cytidine + H2O + H(+) = uridine + NH4(+). It carries out the reaction 2'-deoxycytidine + H2O + H(+) = 2'-deoxyuridine + NH4(+). In terms of biological role, this enzyme scavenges exogenous and endogenous cytidine and 2'-deoxycytidine for UMP synthesis. The sequence is that of Cytidine deaminase from Salmonella newport (strain SL254).